Reading from the N-terminus, the 305-residue chain is tRNA uridine(34) hydroxylase (305 aa).

The Rhodanese domain maps to 125-219; sequence ADENTVVVDT…YLEEVPREQS (95 aa). Cys179 (cysteine persulfide intermediate) is an active-site residue.

This sequence belongs to the TrhO family.

It carries out the reaction uridine(34) in tRNA + AH2 + O2 = 5-hydroxyuridine(34) in tRNA + A + H2O. Its function is as follows. Catalyzes oxygen-dependent 5-hydroxyuridine (ho5U) modification at position 34 in tRNAs. The polypeptide is tRNA uridine(34) hydroxylase (Brucella ovis (strain ATCC 25840 / 63/290 / NCTC 10512)).